The following is a 374-amino-acid chain: Chaperone protein DnaJ (374 aa).

The 66-residue stretch at 4 to 69 folds into the J domain; sequence SYYEILEITQ…EKRAIYDRYG (66 aa). A CR-type zinc finger spans residues 136–213; sequence GCKKNIDFTY…CKGLGYNESK (78 aa). Zn(2+) is bound by residues Cys149, Cys152, Cys165, Cys168, Cys187, Cys190, Cys201, and Cys204. 4 CXXCXGXG motif repeats span residues 149–156, 165–172, 187–194, and 201–208; these read CKTCNGTG, CPKCQGRG, CPDCQGSG, and CSDCKGLG.

This sequence belongs to the DnaJ family. Homodimer. It depends on Zn(2+) as a cofactor.

It is found in the cytoplasm. Participates actively in the response to hyperosmotic and heat shock by preventing the aggregation of stress-denatured proteins and by disaggregating proteins, also in an autonomous, DnaK-independent fashion. Unfolded proteins bind initially to DnaJ; upon interaction with the DnaJ-bound protein, DnaK hydrolyzes its bound ATP, resulting in the formation of a stable complex. GrpE releases ADP from DnaK; ATP binding to DnaK triggers the release of the substrate protein, thus completing the reaction cycle. Several rounds of ATP-dependent interactions between DnaJ, DnaK and GrpE are required for fully efficient folding. Also involved, together with DnaK and GrpE, in the DNA replication of plasmids through activation of initiation proteins. This chain is Chaperone protein DnaJ, found in Campylobacter jejuni subsp. jejuni serotype O:6 (strain 81116 / NCTC 11828).